The following is a 543-amino-acid chain: ADIPOR-like receptor IZH3 (543 aa).

At Met-1–Ser-259 the chain is on the lumenal side. N-linked (GlcNAc...) asparagine glycosylation is found at Asn-45, Asn-123, Asn-153, and Asn-256. Residues Asn-260–Pro-280 traverse the membrane as a helical segment. Topologically, residues Gln-281–Arg-295 are cytoplasmic. The helical transmembrane segment at Trp-296–His-316 threads the bilayer. Residues Thr-317–Phe-330 are Lumenal-facing. Residue Asn-319 is glycosylated (N-linked (GlcNAc...) asparagine). A helical transmembrane segment spans residues Ala-331–Thr-353. Over Met-354 to Cys-357 the chain is Cytoplasmic. Residues Tyr-358–Met-378 traverse the membrane as a helical segment. The Lumenal portion of the chain corresponds to Asn-379–Arg-395. Residues Phe-396–Asp-416 form a helical membrane-spanning segment. At Leu-417–Ser-425 the chain is on the cytoplasmic side. The chain crosses the membrane as a helical span at residues Pro-426–Ile-446. Over Pro-447 to Trp-505 the chain is Lumenal. A helical transmembrane segment spans residues Trp-506–Ile-526. Residues Gly-527 to Ser-543 lie on the Cytoplasmic side of the membrane.

It belongs to the ADIPOR family.

The protein resides in the endoplasmic reticulum membrane. Its function is as follows. ADIPOR-like receptor involved in zinc metabolism either by altering membrane sterol content or by directly altering cellular zinc levels. The sequence is that of ADIPOR-like receptor IZH3 (IZH3) from Saccharomyces cerevisiae (strain ATCC 204508 / S288c) (Baker's yeast).